Consider the following 455-residue polypeptide: Bifunctional protein GlmU (455 aa).

Residues 1 to 227 form a pyrophosphorylase region; the sequence is MGLSVIILAA…CEEVQGVNDR (227 aa). Residues 8-11, Lys-22, Gln-73, 78-79, 100-102, Gly-137, Glu-152, Asn-167, and Asn-225 contribute to the UDP-N-acetyl-alpha-D-glucosamine site; these read LAAG, GT, and YGD. Asp-102 contacts Mg(2+). Residue Asn-225 coordinates Mg(2+). Positions 228–248 are linker; that stretch reads WELTKLERYYQRLMAKKLSLA. An N-acetyltransferase region spans residues 249-455; sequence GVTIIDPERF…KGWHRPTKKE (207 aa). Arg-332 and Lys-350 together coordinate UDP-N-acetyl-alpha-D-glucosamine. Catalysis depends on His-362, which acts as the Proton acceptor. UDP-N-acetyl-alpha-D-glucosamine-binding residues include Tyr-365 and Asn-376. Residues Ala-379, 385–386, Ser-404, Ala-422, and Arg-439 each bind acetyl-CoA; that span reads NY.

This sequence in the N-terminal section; belongs to the N-acetylglucosamine-1-phosphate uridyltransferase family. In the C-terminal section; belongs to the transferase hexapeptide repeat family. As to quaternary structure, homotrimer. Mg(2+) is required as a cofactor.

The protein localises to the cytoplasm. The enzyme catalyses alpha-D-glucosamine 1-phosphate + acetyl-CoA = N-acetyl-alpha-D-glucosamine 1-phosphate + CoA + H(+). The catalysed reaction is N-acetyl-alpha-D-glucosamine 1-phosphate + UTP + H(+) = UDP-N-acetyl-alpha-D-glucosamine + diphosphate. It functions in the pathway nucleotide-sugar biosynthesis; UDP-N-acetyl-alpha-D-glucosamine biosynthesis; N-acetyl-alpha-D-glucosamine 1-phosphate from alpha-D-glucosamine 6-phosphate (route II): step 2/2. The protein operates within nucleotide-sugar biosynthesis; UDP-N-acetyl-alpha-D-glucosamine biosynthesis; UDP-N-acetyl-alpha-D-glucosamine from N-acetyl-alpha-D-glucosamine 1-phosphate: step 1/1. Its pathway is bacterial outer membrane biogenesis; LPS lipid A biosynthesis. Catalyzes the last two sequential reactions in the de novo biosynthetic pathway for UDP-N-acetylglucosamine (UDP-GlcNAc). The C-terminal domain catalyzes the transfer of acetyl group from acetyl coenzyme A to glucosamine-1-phosphate (GlcN-1-P) to produce N-acetylglucosamine-1-phosphate (GlcNAc-1-P), which is converted into UDP-GlcNAc by the transfer of uridine 5-monophosphate (from uridine 5-triphosphate), a reaction catalyzed by the N-terminal domain. This is Bifunctional protein GlmU from Coxiella burnetii (strain CbuK_Q154) (Coxiella burnetii (strain Q154)).